The primary structure comprises 197 residues: Mediator of RNA polymerase II transcription subunit 10 (197 aa).

The tract at residues 1–39 (MSSTAGTRRPRQITPTSPSPSPEPQPGATNGSSSTINVA) is disordered. Over residues 27–37 (GATNGSSSTIN) the composition is skewed to polar residues.

Belongs to the Mediator complex subunit 10 family. As to quaternary structure, component of the Mediator complex.

The protein localises to the nucleus. Functionally, component of the Mediator complex, a coactivator involved in the regulated transcription of nearly all RNA polymerase II-dependent genes. Mediator functions as a bridge to convey information from gene-specific regulatory proteins to the basal RNA polymerase II transcription machinery. Mediator is recruited to promoters by direct interactions with regulatory proteins and serves as a scaffold for the assembly of a functional preinitiation complex with RNA polymerase II and the general transcription factors. The polypeptide is Mediator of RNA polymerase II transcription subunit 10 (NUT2) (Mycosarcoma maydis (Corn smut fungus)).